A 211-amino-acid polypeptide reads, in one-letter code: Protein GrpE (211 aa).

Basic and acidic residues predominate over residues 1–13; the sequence is MVDKDEEQIKQNV. Residues 1–38 form a disordered region; the sequence is MVDKDEEQIKQNVEEDLSSTVEQTGEENIEFPSAPNHP.

The protein belongs to the GrpE family. Homodimer.

The protein resides in the cytoplasm. Its function is as follows. Participates actively in the response to hyperosmotic and heat shock by preventing the aggregation of stress-denatured proteins, in association with DnaK and GrpE. It is the nucleotide exchange factor for DnaK and may function as a thermosensor. Unfolded proteins bind initially to DnaJ; upon interaction with the DnaJ-bound protein, DnaK hydrolyzes its bound ATP, resulting in the formation of a stable complex. GrpE releases ADP from DnaK; ATP binding to DnaK triggers the release of the substrate protein, thus completing the reaction cycle. Several rounds of ATP-dependent interactions between DnaJ, DnaK and GrpE are required for fully efficient folding. The polypeptide is Protein GrpE (Protochlamydia amoebophila (strain UWE25)).